The primary structure comprises 66 residues: UPF0337 protein BT9727_0908 (66 aa).

The segment at 1 to 22 is disordered; that stretch reads MSENGLKEQITGKVEKTKGQVK. Over residues 13–22 the composition is skewed to basic and acidic residues; the sequence is KVEKTKGQVK.

The protein belongs to the UPF0337 (CsbD) family.

The chain is UPF0337 protein BT9727_0908 from Bacillus thuringiensis subsp. konkukian (strain 97-27).